Here is a 265-residue protein sequence, read N- to C-terminus: Phosphate import ATP-binding protein PstB 1 (265 aa).

The ABC transporter domain occupies 20–260 (LSTNDLSVLY…PKGKITEDYI (241 aa)). An ATP-binding site is contributed by 53 to 60 (GASGSGKS).

The protein belongs to the ABC transporter superfamily. Phosphate importer (TC 3.A.1.7) family. In terms of assembly, the complex is composed of two ATP-binding proteins (PstB), two transmembrane proteins (PstC and PstA) and a solute-binding protein (PstS).

Its subcellular location is the cell membrane. The catalysed reaction is phosphate(out) + ATP + H2O = ADP + 2 phosphate(in) + H(+). Part of the ABC transporter complex PstSACB involved in phosphate import. Responsible for energy coupling to the transport system. The protein is Phosphate import ATP-binding protein PstB 1 of Lactobacillus acidophilus (strain ATCC 700396 / NCK56 / N2 / NCFM).